Here is a 465-residue protein sequence, read N- to C-terminus: Ras-like GTPase YcjX (465 aa).

The Walker A motif signature appears at 26–33; sequence GLSRSGKT. The GTP site is built by S28, G31, K32, T33, A34, W95, T99, and R100. GDP contacts are provided by G31, K32, T33, A34, W95, and T99. K249 carries the post-translational modification N6-acetyllysine. 4 residues coordinate GTP: K338, D340, H341, and V380. GDP-binding residues include K338, D340, H341, and V380.

To H.influenzae HI_1637. As to quaternary structure, monomer in solution. It depends on Mg(2+) as a cofactor.

It carries out the reaction GTP + H2O = GDP + phosphate + H(+). With respect to regulation, alternates between an inactive form bound to GDP and an active form bound to GTP. Likely activated by a guanine nucleotide-exchange factor (GEF). In terms of biological role, binds GTP and GDP. Has intrinsic GTPase activity. Does not hydrolyze ATP. May act as a transducer of stress responses. The polypeptide is Ras-like GTPase YcjX (ycjX) (Escherichia coli (strain K12)).